The following is an 883-amino-acid chain: 3-hydroxy-3-methylglutaryl-coenzyme A reductase (883 aa).

At M1–H9 the chain is on the cytoplasmic side. A helical transmembrane segment spans residues G10–G39. Over N40–D56 the chain is Lumenal. A helical transmembrane segment spans residues V57–F78. Residues Q79 to K89 lie on the Cytoplasmic side of the membrane. The chain crosses the membrane as a helical span at residues Y90–L114. Over D115 to E123 the chain is Lumenal. The helical transmembrane segment at A124 to S149 threads the bilayer. Topologically, residues Q150–R159 are cytoplasmic. A helical transmembrane segment spans residues G160–V187. The Lumenal segment spans residues R188 to E191. A helical transmembrane segment spans residues I192–L220. The Cytoplasmic portion of the chain corresponds to E221 to K249. The helical transmembrane segment at P250–S276 threads the bilayer. Over E277–R316 the chain is Lumenal. N-linked (GlcNAc...) asparagine glycosylation occurs at N282. A helical membrane pass occupies residues M317–F341. The Cytoplasmic portion of the chain corresponds to E342 to A883. Residues R373 to E396 form a disordered region. Catalysis depends on charge relay system residues E554, K686, and D762. H861 serves as the catalytic Proton donor.

The protein belongs to the HMG-CoA reductase family. Homotetramer. Homodimer.

The protein localises to the endoplasmic reticulum membrane. The protein resides in the peroxisome membrane. It carries out the reaction (R)-mevalonate + 2 NADP(+) + CoA = (3S)-3-hydroxy-3-methylglutaryl-CoA + 2 NADPH + 2 H(+). Its pathway is metabolic intermediate biosynthesis; (R)-mevalonate biosynthesis; (R)-mevalonate from acetyl-CoA: step 3/3. Functionally, catalyzes the conversion of (3S)-hydroxy-3-methylglutaryl-CoA (HMG-CoA) to mevalonic acid, the rate-limiting step in the synthesis of cholesterol and other isoprenoids, thus plays a critical role in cellular cholesterol homeostasis. The chain is 3-hydroxy-3-methylglutaryl-coenzyme A reductase (hmgcr) from Xenopus laevis (African clawed frog).